A 263-amino-acid chain; its full sequence is Small ribosomal subunit protein eS4 (263 aa).

Residues 42-104 form the S4 RNA-binding domain; sequence LPLIVFLRNR…TGEHFRLVYD (63 aa).

This sequence belongs to the eukaryotic ribosomal protein eS4 family.

The polypeptide is Small ribosomal subunit protein eS4 (RPS4Y1) (Pongo pygmaeus (Bornean orangutan)).